Reading from the N-terminus, the 116-residue chain is Small ribosomal subunit protein uS13m (116 aa).

Residues 92–116 (HQDGSPLRGQRTHTNARTARKQIRK) form a disordered region.

It belongs to the universal ribosomal protein uS13 family. As to quaternary structure, part of the small ribosomal subunit.

It localises to the mitochondrion. Functionally, located at the top of the head of the small subunit, it contacts several helices of the 18S rRNA. The polypeptide is Small ribosomal subunit protein uS13m (RPS13) (Triticum aestivum (Wheat)).